The chain runs to 1073 residues: Activated Cdc42 kinase Ack (1073 aa).

The disordered stretch occupies residues Ile-88 to Asn-110. A Protein kinase domain is found at Ile-123–Leu-383. Residues Leu-129–Val-137 and Lys-156 each bind ATP. The active-site Proton acceptor is the Asp-250. The region spanning Met-386–Val-446 is the SH3 domain. 3 disordered regions span residues Gln-484–Gln-506, Pro-803–Ala-834, and Ala-862–Gln-882. Positions Ser-812–Pro-826 are enriched in low complexity. A UBA domain is found at Gly-1029 to Ala-1072.

It belongs to the protein kinase superfamily. Tyr protein kinase family. In terms of assembly, interacts with yki and ex. Interacts with drk. Likely to be a member of an axonal guidance receptor complex that includes SH3PX1, dock and Dscam. Interacts (via N-terminus) with dock. Interacts with SH3PX1 (via SH3 domain). Mg(2+) serves as cofactor. Phosphorylated. Autophosphorylated. Detected in ovaries (at protein level). In adults, relatively higher expression in the head compared to the body.

The protein localises to the cytoplasm. It is found in the cytoplasmic vesicle. The protein resides in the clathrin-coated vesicle. It catalyses the reaction L-tyrosyl-[protein] + ATP = O-phospho-L-tyrosyl-[protein] + ADP + H(+). It carries out the reaction L-threonyl-[protein] + ATP = O-phospho-L-threonyl-[protein] + ADP + H(+). Functionally, non-receptor tyrosine-protein and serine/threonine-protein kinase that is implicated in diverse biological functions such as cell survival, cell differentiation, cell growth and proliferation. Phosphorylates SH3PX1 and ex. Phosphorylates SH3PX1 predominantly on 'Tyr-56', which likely promotes the recruitment of SH3PX1 to an axonal guidance receptor complex that includes dock and Dscam; because phosphorylation of SH3PX1 increases its interaction with the complex member dock while decreasing its interaction with the actin cytoskeleton modulator WASp. In the wing and eye, promotes tissue growth, and during embryogenesis coordinates cell shape changes required for correct dorsal closure. Functions in the negative regulation of the Hippo/SWH (Sav/Wts/Hpo) signaling pathway by enhancing yki activity thereby promoting cell proliferation and inhibiting apoptosis. This is accomplished, at least in part, by phosphorylating ex thereby reducing its ability to efficiently activate the Hippo signaling cascade. In the eye disk, wing disk and possibly spermatids, inhibits programmed cell death induced by hid and rpr through a mechanism that is independent of the MAP kinase signal transduction pathway. Essential for male and female fertility. During oogenesis required for the correct temporal assembly, and consequently the catalytic activity of long Ctps filaments (cytoophidium) in the germline nurse cells, likely by phosphorylating an unidentified substrate that is essential for linking individual Ctps filaments into large, catalytically active assemblies. The chain is Activated Cdc42 kinase Ack from Drosophila melanogaster (Fruit fly).